The primary structure comprises 699 residues: Proline-rich receptor-like protein kinase PERK7 (699 aa).

The segment at Met1 to Ser167 is disordered. Over Met1–Asn172 the chain is Extracellular. 2 stretches are compositionally biased toward pro residues: residues Asn9–Pro23 and Ser43–Pro68. Asn70 is a glycosylation site (N-linked (GlcNAc...) asparagine). Low complexity predominate over residues Pro100 to Asp121. Residue Asn131 is glycosylated (N-linked (GlcNAc...) asparagine). A compositionally biased stretch (polar residues) spans His148–Thr158. N-linked (GlcNAc...) asparagine glycosylation is present at Asn164. The helical transmembrane segment at Ile173–Leu193 threads the bilayer. Residues Cys194–Ile699 lie on the Cytoplasmic side of the membrane. Position 325 is a phosphothreonine (Thr325). In terms of domain architecture, Protein kinase spans Phe336–Leu615. ATP is bound by residues Leu342–Val350 and Lys364. Phosphotyrosine is present on Tyr410. Asp461 (proton acceptor) is an active-site residue. 2 positions are modified to phosphoserine: Ser465 and Ser494. 2 positions are modified to phosphothreonine: Thr495 and Thr500. Tyr508 bears the Phosphotyrosine mark. Disordered stretches follow at residues Leu609 to Met639 and Asp658 to Ile699. Residues Gly687–Ile699 are compositionally biased toward polar residues.

It belongs to the protein kinase superfamily. Ser/Thr protein kinase family. Mostly expressed in flower buds.

It localises to the cell membrane. The catalysed reaction is L-seryl-[protein] + ATP = O-phospho-L-seryl-[protein] + ADP + H(+). It carries out the reaction L-threonyl-[protein] + ATP = O-phospho-L-threonyl-[protein] + ADP + H(+). The polypeptide is Proline-rich receptor-like protein kinase PERK7 (PERK7) (Arabidopsis thaliana (Mouse-ear cress)).